The following is a 261-amino-acid chain: Thiamine thiazole synthase (261 aa).

Residues Ala33, 52–53, Gly60, Val124, and 152–154 each bind NAD(+); these read ER and HVD. Asp154 and His169 together coordinate Fe cation. Residue Ile219 coordinates NAD(+). Residue Arg229 participates in glycine binding.

This sequence belongs to the THI4 family. In terms of assembly, homooctamer; tetramer of dimers. Fe(2+) is required as a cofactor.

The enzyme catalyses hydrogen sulfide + glycine + NAD(+) = ADP-5-ethyl-4-methylthiazole-2-carboxylate + nicotinamide + 3 H2O + H(+). It functions in the pathway cofactor biosynthesis; thiamine diphosphate biosynthesis. Its function is as follows. Involved in the biosynthesis of the thiazole moiety of thiamine. Catalyzes the conversion of NAD and glycine to adenosine diphosphate 5-(2-hydroxyethyl)-4-methylthiazole-2-carboxylate (ADT), an adenylated thiazole intermediate, using free sulfide as a source of sulfur. The polypeptide is Thiamine thiazole synthase (Pyrobaculum aerophilum (strain ATCC 51768 / DSM 7523 / JCM 9630 / CIP 104966 / NBRC 100827 / IM2)).